We begin with the raw amino-acid sequence, 64 residues long: Large ribosomal subunit protein uL29 (64 aa).

It belongs to the universal ribosomal protein uL29 family.

The chain is Large ribosomal subunit protein uL29 from Polynucleobacter necessarius subsp. necessarius (strain STIR1).